Consider the following 184-residue polypeptide: Photosystem I assembly protein Ycf4 (184 aa).

2 helical membrane passes run 20–40 (GNFF…VVGI) and 64–84 (IVMS…WCTI).

The protein belongs to the Ycf4 family.

The protein localises to the plastid. It is found in the chloroplast thylakoid membrane. Its function is as follows. Seems to be required for the assembly of the photosystem I complex. The chain is Photosystem I assembly protein Ycf4 from Citrus sinensis (Sweet orange).